The following is an 866-amino-acid chain: Potassium voltage-gated channel subfamily KQT member 3 (866 aa).

The disordered stretch occupies residues 1–42 (MGLKARRPAGAAGGGGDGGGGGGGAANPAGGDAAAAGDEERK). The Cytoplasmic portion of the chain corresponds to 1-120 (MGLKARRPAG…IYDALERPRG (120 aa)). Over residues 11-25 (AAGGGGDGGGGGGGA) the composition is skewed to gly residues. Low complexity predominate over residues 26 to 36 (ANPAGGDAAAA). Threonine 81 bears the Phosphothreonine mark. A helical membrane pass occupies residues 121-143 (WALLYHALVFLIVLGCLILAVLT). Residues 144–153 (TFREYETVSG) are Extracellular-facing. A helical membrane pass occupies residues 154-175 (DWLLLLETFAIFIFGAEFALRI). Topologically, residues 176-193 (WAAGCCCRYKGWRGRLKF) are cytoplasmic. A helical membrane pass occupies residues 194–213 (ARKPLCMLDIFVLIASVPVV). The Extracellular segment spans residues 214–225 (AVGNQGNVLATS). The chain crosses the membrane as a helical; Voltage-sensor span at residues 226–244 (LRSLRFLQILRMLRMDRRG). An a 1,2-diacyl-sn-glycero-3-phospho-(1D-myo-inositol-4,5-bisphosphate)-binding site is contributed by arginine 243. The Cytoplasmic segment spans residues 245–256 (GTWKLLGSAICA). Residues 257-282 (HSKELITAWYIGFLTLILSSFLVYLV) traverse the membrane as a helical segment. Lysine 259 is a binding site for a 1,2-diacyl-sn-glycero-3-phospho-(1D-myo-inositol-4,5-bisphosphate). Residues 283 to 302 (EKDVPEVDAQGEEMKEEFET) are Extracellular-facing. An intramembrane region (pore-forming) is located at residues 303–315 (YADALWWGLITLA). Residues 316–321 (TIGYGD) carry the Selectivity filter motif. Residues 316 to 326 (TIGYGDKTPKT) are Extracellular-facing. Residues 327–353 (WEGRLIAATFSLIGVSFFALPAGILGS) traverse the membrane as a helical segment. The Cytoplasmic segment spans residues 354 to 866 (GLALKVQEQH…SIWTPSGKPT (513 aa)). Positions 356–537 (ALKVQEQHRQ…RLYKKKFKET (182 aa)) are mediates interaction with calmodulin. Lysine 366 lines the a 1,2-diacyl-sn-glycero-3-phospho-(1D-myo-inositol-4,5-bisphosphate) pocket. Disordered regions lie at residues 574–617 (PGPP…EDQS), 656–676 (GFSP…EDRR), and 757–866 (QVEL…GKPT). A compositionally biased stretch (polar residues) spans 837–866 (EPFTPSGSLPLSSTGDGISDSIWTPSGKPT).

Belongs to the potassium channel family. KQT (TC 1.A.1.15) subfamily. Kv7.3/KCNQ3 sub-subfamily. As to quaternary structure, heterotetramer with KCNQ2; forms heterotetrameric native M-channel responsible for the M-current. Interacts with calmodulin; the interaction is calcium-independent, constitutive and participates in the proper assembly of a functional M-channel. Heteromultimer with KCNQ5. May associate with KCNE2. Interacts with IQCJ-SCHIP1. Interacts (via the pore module) with SLC5A3/SMIT1; forms a coregulatory complex that alters ion selectivity, voltage dependence and gating kinetics of the channel. KCNQ2/KCNQ3 are ubiquitinated by NEDD4L. Ubiquitination leads to protein degradation. Degradation induced by NEDD4L is inhibited by USP36.

The protein resides in the cell membrane. The enzyme catalyses K(+)(in) = K(+)(out). It catalyses the reaction Rb(+)(in) = Rb(+)(out). It carries out the reaction Cs(+)(in) = Cs(+)(out). The catalysed reaction is Na(+)(in) = Na(+)(out). With respect to regulation, phosphatidylinositol-4,5-bisphosphate (PIP2) potentiates the activation of KCNQ channels by enhancing the electro-mechanical coupling of the voltage-sensing domain (VSD) and the pore-forming domain (PD). In the closed state of the channel, PIP2 is anchored at the S2-S3 loop; upon channel activation, PIP2 interacts with the S4-S5 linker and is involved in channel gating. Calcium suppresses KCNQ2-KCNQ3 channel currents, with calcium-bound calmodulin inducing a change in channel configuration which leads to the reduction of channel affinity for PIP2 and subsequent current suppression. Pore-forming subunit of the voltage-gated potassium (Kv) M-channel which is responsible for the M-current, a key controller of neuronal excitability. M-channel is composed of pore-forming subunits KCNQ2 and KCNQ3 assembled as heterotetramers. The native M-current has a slowly activating and deactivating potassium conductance which plays a critical role in determining the subthreshold electrical excitability of neurons as well as the responsiveness to synaptic inputs. M-channel is selectively permeable in vitro to other cations besides potassium, in decreasing order of affinity K(+) &gt; Rb(+) &gt; Cs(+) &gt; Na(+). M-channel association with SLC5A3/SMIT1 alters channel ion selectivity, increasing Na(+) and Cs(+) permeation relative to K(+). Suppressed by activation of M1 muscarinic acetylcholine receptors. KCNQ3 also associates with KCNQ5 to form a functional channel in vitro and may also contribute to the M-current in brain. The polypeptide is Potassium voltage-gated channel subfamily KQT member 3 (Bos taurus (Bovine)).